We begin with the raw amino-acid sequence, 361 residues long: tRNA/tmRNA (uracil-C(5))-methyltransferase (361 aa).

The S-adenosyl-L-methionine site is built by glutamine 185, tyrosine 213, asparagine 218, glutamate 234, and aspartate 294. The active-site Nucleophile is cysteine 319. Catalysis depends on glutamate 353, which acts as the Proton acceptor.

It belongs to the class I-like SAM-binding methyltransferase superfamily. RNA M5U methyltransferase family. TrmA subfamily.

The catalysed reaction is uridine(54) in tRNA + S-adenosyl-L-methionine = 5-methyluridine(54) in tRNA + S-adenosyl-L-homocysteine + H(+). It catalyses the reaction uridine(341) in tmRNA + S-adenosyl-L-methionine = 5-methyluridine(341) in tmRNA + S-adenosyl-L-homocysteine + H(+). Functionally, dual-specificity methyltransferase that catalyzes the formation of 5-methyluridine at position 54 (m5U54) in all tRNAs, and that of position 341 (m5U341) in tmRNA (transfer-mRNA). The protein is tRNA/tmRNA (uracil-C(5))-methyltransferase of Pseudomonas putida (strain ATCC 47054 / DSM 6125 / CFBP 8728 / NCIMB 11950 / KT2440).